Here is a 130-residue protein sequence, read N- to C-terminus: Small ribosomal subunit protein uS9 (130 aa).

The segment at 105–130 (TRDPRMKERKKYGLKKARRAPQFSKR) is disordered. A compositionally biased stretch (basic residues) spans 111-130 (KERKKYGLKKARRAPQFSKR).

Belongs to the universal ribosomal protein uS9 family.

This Acetivibrio thermocellus (strain ATCC 27405 / DSM 1237 / JCM 9322 / NBRC 103400 / NCIMB 10682 / NRRL B-4536 / VPI 7372) (Clostridium thermocellum) protein is Small ribosomal subunit protein uS9.